Here is a 438-residue protein sequence, read N- to C-terminus: Coenzyme A disulfide reductase (438 aa).

Position 8 to 33 (8 to 33 (GAVAGGATCASQIRRLDKESDIIIFE)) interacts with FAD. 5 residues coordinate substrate: Thr-15, Gln-19, Arg-22, Ser-39, and Asn-42. Residue Cys-43 is the Nucleophile of the active site. Residue Cys-43 is the Redox-active of the active site. Lys-71 serves as a coordination point for substrate. Residue 151–166 (VLVVGAGYVSLEVLEN) participates in NADP(+) binding. FAD is bound at residue 267-277 (TNVPNIYAIGD). His-299 contacts substrate. Residue Tyr-419 coordinates FAD. Lys-427 contacts substrate.

The protein belongs to the class-III pyridine nucleotide-disulfide oxidoreductase family. Homodimer. FAD is required as a cofactor.

The catalysed reaction is NADP(+) + 2 CoA = CoA-disulfide + NADPH + H(+). Catalyzes specifically the NADPH-dependent reduction of coenzyme A disulfide. The protein is Coenzyme A disulfide reductase of Staphylococcus aureus (strain COL).